The sequence spans 318 residues: Probable dual-specificity RNA methyltransferase RlmN (318 aa).

The active-site Proton acceptor is Glu-63. In terms of domain architecture, Radical SAM core spans 69–299; that stretch reads HDYGRTVCVS…VSLRRELGAD (231 aa). Cys-76 and Cys-304 form a disulfide bridge. Cys-83, Cys-87, and Cys-90 together coordinate [4Fe-4S] cluster. Residues 130–131, Ser-162, 185–187, and Asn-261 contribute to the S-adenosyl-L-methionine site; these read GE and SLH. The S-methylcysteine intermediate role is filled by Cys-304.

This sequence belongs to the radical SAM superfamily. RlmN family. It depends on [4Fe-4S] cluster as a cofactor.

The protein localises to the cytoplasm. It carries out the reaction adenosine(2503) in 23S rRNA + 2 reduced [2Fe-2S]-[ferredoxin] + 2 S-adenosyl-L-methionine = 2-methyladenosine(2503) in 23S rRNA + 5'-deoxyadenosine + L-methionine + 2 oxidized [2Fe-2S]-[ferredoxin] + S-adenosyl-L-homocysteine. It catalyses the reaction adenosine(37) in tRNA + 2 reduced [2Fe-2S]-[ferredoxin] + 2 S-adenosyl-L-methionine = 2-methyladenosine(37) in tRNA + 5'-deoxyadenosine + L-methionine + 2 oxidized [2Fe-2S]-[ferredoxin] + S-adenosyl-L-homocysteine. Specifically methylates position 2 of adenine 2503 in 23S rRNA and position 2 of adenine 37 in tRNAs. In Desulforudis audaxviator (strain MP104C), this protein is Probable dual-specificity RNA methyltransferase RlmN.